The primary structure comprises 539 residues: Putative cysteine ligase BshC (539 aa).

Residues 249–270 (VETNDEVTNRLNESQAAMKRAG) adopt a coiled-coil conformation.

This sequence belongs to the BshC family.

Involved in bacillithiol (BSH) biosynthesis. May catalyze the last step of the pathway, the addition of cysteine to glucosamine malate (GlcN-Mal) to generate BSH. The sequence is that of Putative cysteine ligase BshC from Bacillus pumilus (strain SAFR-032).